The chain runs to 161 residues: Phosphopantetheine adenylyltransferase (161 aa).

Substrate is bound at residue T10. ATP contacts are provided by residues 10 to 11 (TF) and H18. Residues K42, M74, and R88 each coordinate substrate. ATP contacts are provided by residues 89–91 (GLR), E99, and 124–130 (WSFISSS).

This sequence belongs to the bacterial CoaD family. In terms of assembly, homohexamer. It depends on Mg(2+) as a cofactor.

It localises to the cytoplasm. It catalyses the reaction (R)-4'-phosphopantetheine + ATP + H(+) = 3'-dephospho-CoA + diphosphate. Its pathway is cofactor biosynthesis; coenzyme A biosynthesis; CoA from (R)-pantothenate: step 4/5. Functionally, reversibly transfers an adenylyl group from ATP to 4'-phosphopantetheine, yielding dephospho-CoA (dPCoA) and pyrophosphate. The sequence is that of Phosphopantetheine adenylyltransferase from Serratia proteamaculans (strain 568).